The primary structure comprises 66 residues: Large ribosomal subunit protein bL35 (66 aa).

The segment covering Met-1–Arg-16 has biased composition (basic residues). The segment at Met-1–Gly-20 is disordered.

The protein belongs to the bacterial ribosomal protein bL35 family.

The protein is Large ribosomal subunit protein bL35 of Streptococcus thermophilus (strain ATCC BAA-250 / LMG 18311).